A 21-amino-acid polypeptide reads, in one-letter code: MLISGTAFLRLRTNRKAFPTP.

Involved in erythromycin resistance. The polypeptide is 23S rRNA methylase leader peptide (Corynebacterium diphtheriae).